The following is a 288-amino-acid chain: MSRLRALLGLGLLVAGSRVPRIKSQTIACRSGPTWWGPQRLNSGGRWDSEVMASTVVKYLSQEEAQAVDQELFNEYQFSVDQLMELAGLSCATAIAKAYPPTSMSRSPPTVLVICGPGNNGGDGLVCARHLKLFGYEPTIYYPKRPNKPLFTALVTQCQKMDIPFLGEMPAEPMTIDELYELVVDAIFGFSFKGDVREPFHSILSVLKGLTVPIASIDIPSGWDVEKGNAGGIQPDLLISLTAPKKSATQFTGRYHYLGGRFVPPALEKKYQLNLPPYPDTECVYRLQ.

The transit peptide at 1–47 (MSRLRALLGLGLLVAGSRVPRIKSQTIACRSGPTWWGPQRLNSGGRW) directs the protein to the mitochondrion. A Phosphoserine modification is found at Ser-49. One can recognise a YjeF N-terminal domain in the interval 65–275 (AQAVDQELFN…ALEKKYQLNL (211 aa)). Residue 119–123 (NNGGD) participates in (6S)-NADPHX binding. K(+) is bound at residue Asn-120. Lys-144 is modified (N6-succinyllysine). Asp-185 contributes to the K(+) binding site. (6S)-NADPHX-binding positions include 189 to 195 (GFSFKGD) and Asp-218. Ser-221 is a K(+) binding site.

This sequence belongs to the NnrE/AIBP family. In terms of assembly, homodimer. Interacts with APOA1 and APOA2. K(+) is required as a cofactor. Post-translationally, undergoes physiological phosphorylation during sperm capacitation, downstream to PKA activation. As to expression, ubiquitously expressed, with highest levels in kidney, heart and liver. Present in cerebrospinal fluid and urine but not in serum from healthy patients. Present in serum of sepsis patients (at protein level).

The protein localises to the mitochondrion. The protein resides in the secreted. It catalyses the reaction (6R)-NADHX = (6S)-NADHX. The catalysed reaction is (6R)-NADPHX = (6S)-NADPHX. Catalyzes the epimerization of the S- and R-forms of NAD(P)HX, a damaged form of NAD(P)H that is a result of enzymatic or heat-dependent hydration. This is a prerequisite for the S-specific NAD(P)H-hydrate dehydratase to allow the repair of both epimers of NAD(P)HX. Accelerates cholesterol efflux from endothelial cells to high-density lipoprotein (HDL) and thereby regulates angiogenesis. In Homo sapiens (Human), this protein is NAD(P)H-hydrate epimerase.